The chain runs to 384 residues: Probable beta-1,3-galactosyltransferase 1 (384 aa).

The chain crosses the membrane as a helical; Signal-anchor for type II membrane protein span at residues 21 to 43 (SVFFMCLASFCLGMFFTNRMWNI). Residues Asn73 and Asn105 are each glycosylated (N-linked (GlcNAc...) asparagine).

The protein belongs to the glycosyltransferase 31 family. The cofactor is Mn(2+).

The protein resides in the golgi apparatus membrane. It participates in protein modification; protein glycosylation. In terms of biological role, beta-1,3-galactosyltransferase that transfers galactose from UDP-galactose to substrates with a terminal glycosyl residue. This chain is Probable beta-1,3-galactosyltransferase 1 (B3GALT1), found in Arabidopsis thaliana (Mouse-ear cress).